We begin with the raw amino-acid sequence, 126 residues long: uncharacterized protein (126 aa).

Residues 13–45 are disordered; sequence VAPKAGREEEQPPPPAGLGCGARGEPGRGPLEH.

It localises to the cytoplasm. Its subcellular location is the cytoskeleton. The protein localises to the cilium basal body. This is an uncharacterized protein from Homo sapiens (Human).